Reading from the N-terminus, the 115-residue chain is UPF0102 protein Kole_1919 (115 aa).

Belongs to the UPF0102 family.

This chain is UPF0102 protein Kole_1919, found in Kosmotoga olearia (strain ATCC BAA-1733 / DSM 21960 / TBF 19.5.1).